The following is a 254-amino-acid chain: Pyridoxine 5'-phosphate synthase (254 aa).

Position 12 (Asn12) interacts with 3-amino-2-oxopropyl phosphate. A 1-deoxy-D-xylulose 5-phosphate-binding site is contributed by 14–15; the sequence is DH. Arg23 is a binding site for 3-amino-2-oxopropyl phosphate. His48 functions as the Proton acceptor in the catalytic mechanism. 1-deoxy-D-xylulose 5-phosphate contacts are provided by Arg50 and His55. Glu75 acts as the Proton acceptor in catalysis. Position 105 (Thr105) interacts with 1-deoxy-D-xylulose 5-phosphate. His199 acts as the Proton donor in catalysis. Residues Gly200 and 221 to 222 contribute to the 3-amino-2-oxopropyl phosphate site; that span reads GF.

Belongs to the PNP synthase family. Homooctamer; tetramer of dimers.

It localises to the cytoplasm. It catalyses the reaction 3-amino-2-oxopropyl phosphate + 1-deoxy-D-xylulose 5-phosphate = pyridoxine 5'-phosphate + phosphate + 2 H2O + H(+). It functions in the pathway cofactor biosynthesis; pyridoxine 5'-phosphate biosynthesis; pyridoxine 5'-phosphate from D-erythrose 4-phosphate: step 5/5. Catalyzes the complicated ring closure reaction between the two acyclic compounds 1-deoxy-D-xylulose-5-phosphate (DXP) and 3-amino-2-oxopropyl phosphate (1-amino-acetone-3-phosphate or AAP) to form pyridoxine 5'-phosphate (PNP) and inorganic phosphate. The chain is Pyridoxine 5'-phosphate synthase from Rhodopseudomonas palustris (strain ATCC BAA-98 / CGA009).